The sequence spans 378 residues: Succinyl-diaminopimelate desuccinylase (378 aa).

A Zn(2+)-binding site is contributed by His-66. The active site involves Asp-68. Asp-100 is a Zn(2+) binding site. Glu-134 functions as the Proton acceptor in the catalytic mechanism. Zn(2+) contacts are provided by Glu-135, Glu-163, and His-350.

This sequence belongs to the peptidase M20A family. DapE subfamily. In terms of assembly, homodimer. Zn(2+) serves as cofactor. The cofactor is Co(2+).

The enzyme catalyses N-succinyl-(2S,6S)-2,6-diaminopimelate + H2O = (2S,6S)-2,6-diaminopimelate + succinate. It participates in amino-acid biosynthesis; L-lysine biosynthesis via DAP pathway; LL-2,6-diaminopimelate from (S)-tetrahydrodipicolinate (succinylase route): step 3/3. Its function is as follows. Catalyzes the hydrolysis of N-succinyl-L,L-diaminopimelic acid (SDAP), forming succinate and LL-2,6-diaminopimelate (DAP), an intermediate involved in the bacterial biosynthesis of lysine and meso-diaminopimelic acid, an essential component of bacterial cell walls. This Hydrogenovibrio crunogenus (strain DSM 25203 / XCL-2) (Thiomicrospira crunogena) protein is Succinyl-diaminopimelate desuccinylase.